The chain runs to 359 residues: 3-dehydroquinate synthase (359 aa).

NAD(+) contacts are provided by residues 71-76 (DGEAYK), 105-109 (GVIGD), 129-130 (TT), lysine 142, and lysine 151. 3 residues coordinate Zn(2+): glutamate 184, histidine 247, and histidine 264.

This sequence belongs to the sugar phosphate cyclases superfamily. Dehydroquinate synthase family. Co(2+) serves as cofactor. Requires Zn(2+) as cofactor. NAD(+) is required as a cofactor.

Its subcellular location is the cytoplasm. The enzyme catalyses 7-phospho-2-dehydro-3-deoxy-D-arabino-heptonate = 3-dehydroquinate + phosphate. Its pathway is metabolic intermediate biosynthesis; chorismate biosynthesis; chorismate from D-erythrose 4-phosphate and phosphoenolpyruvate: step 2/7. In terms of biological role, catalyzes the conversion of 3-deoxy-D-arabino-heptulosonate 7-phosphate (DAHP) to dehydroquinate (DHQ). The sequence is that of 3-dehydroquinate synthase from Burkholderia multivorans (strain ATCC 17616 / 249).